Consider the following 588-residue polypeptide: Aspartate--tRNA ligase (588 aa).

Residue E177 participates in L-aspartate binding. The interval 201-204 (QLFK) is aspartate. R223 serves as a coordination point for L-aspartate. Residues 223–225 (RDE) and Q232 contribute to the ATP site. Residue H451 coordinates L-aspartate. E485 lines the ATP pocket. An L-aspartate-binding site is contributed by R492. 537-540 (GLDR) contributes to the ATP binding site.

This sequence belongs to the class-II aminoacyl-tRNA synthetase family. Type 1 subfamily. As to quaternary structure, homodimer.

The protein resides in the cytoplasm. It catalyses the reaction tRNA(Asp) + L-aspartate + ATP = L-aspartyl-tRNA(Asp) + AMP + diphosphate. Functionally, catalyzes the attachment of L-aspartate to tRNA(Asp) in a two-step reaction: L-aspartate is first activated by ATP to form Asp-AMP and then transferred to the acceptor end of tRNA(Asp). This Staphylococcus aureus (strain NCTC 8325 / PS 47) protein is Aspartate--tRNA ligase.